Here is a 957-residue protein sequence, read N- to C-terminus: Glycine dehydrogenase (decarboxylating) (957 aa).

K708 is subject to N6-(pyridoxal phosphate)lysine.

The protein belongs to the GcvP family. In terms of assembly, the glycine cleavage system is composed of four proteins: P, T, L and H. The cofactor is pyridoxal 5'-phosphate.

The enzyme catalyses N(6)-[(R)-lipoyl]-L-lysyl-[glycine-cleavage complex H protein] + glycine + H(+) = N(6)-[(R)-S(8)-aminomethyldihydrolipoyl]-L-lysyl-[glycine-cleavage complex H protein] + CO2. In terms of biological role, the glycine cleavage system catalyzes the degradation of glycine. The P protein binds the alpha-amino group of glycine through its pyridoxal phosphate cofactor; CO(2) is released and the remaining methylamine moiety is then transferred to the lipoamide cofactor of the H protein. The polypeptide is Glycine dehydrogenase (decarboxylating) (Escherichia coli (strain ATCC 8739 / DSM 1576 / NBRC 3972 / NCIMB 8545 / WDCM 00012 / Crooks)).